A 339-amino-acid chain; its full sequence is 5-dehydro-2-deoxygluconokinase (339 aa).

Belongs to the carbohydrate kinase PfkB family.

It carries out the reaction 5-dehydro-2-deoxy-D-gluconate + ATP = 6-phospho-5-dehydro-2-deoxy-D-gluconate + ADP + H(+). It participates in polyol metabolism; myo-inositol degradation into acetyl-CoA; acetyl-CoA from myo-inositol: step 5/7. In terms of biological role, catalyzes the phosphorylation of 5-dehydro-2-deoxy-D-gluconate (2-deoxy-5-keto-D-gluconate or DKG) to 6-phospho-5-dehydro-2-deoxy-D-gluconate (DKGP). The polypeptide is 5-dehydro-2-deoxygluconokinase (Clostridium botulinum (strain Eklund 17B / Type B)).